The following is a 74-amino-acid chain: Small ribosomal subunit protein bS18 (74 aa).

The protein belongs to the bacterial ribosomal protein bS18 family. Part of the 30S ribosomal subunit. Forms a tight heterodimer with protein bS6.

Binds as a heterodimer with protein bS6 to the central domain of the 16S rRNA, where it helps stabilize the platform of the 30S subunit. This chain is Small ribosomal subunit protein bS18, found in Zymomonas mobilis subsp. mobilis (strain ATCC 31821 / ZM4 / CP4).